A 90-amino-acid polypeptide reads, in one-letter code: Serine protease inhibitor kazal-like protein, minor form (90 aa).

The first 23 residues, 1 to 23, serve as a signal peptide directing secretion; it reads MSSTWIKFLFILTLVLLPYSVFS. Residues 33-89 enclose the Kazal-like domain; sequence VIKEPNCTMYKSKSECSNIAENPVCADDRNTYYNECYFCIEKVVEKLKYRYHGICIY. N38 carries an N-linked (GlcNAc...) asparagine glycan.

In terms of tissue distribution, luminal fluid and mucosal folds of the seminal vesicles (at protein level). Not detected in brain, heart, lung, liver, kidney, stomach, small intestine, muscle, skin, thymus, placenta or bladder.

It localises to the secreted. Its function is as follows. Does not function as an inhibitor of trypsin, chymotrypsin, subtilisin or elastase. Binds sperm and enhances sperm motility. May act as a decapacitation factor, suppresses BSA-stimulated sperm capacitation and blocks sperm-oocyte interactions in vitro. The chain is Serine protease inhibitor kazal-like protein, minor form (Spinkl) from Mus musculus (Mouse).